Consider the following 289-residue polypeptide: Pyridoxal kinase PdxY (289 aa).

Substrate is bound by residues serine 9 and 44–45 (TQ). Positions 112, 144, 149, and 182 each coordinate ATP. Aspartate 225 provides a ligand contact to substrate.

The protein belongs to the pyridoxine kinase family. PdxY subfamily. Homodimer. It depends on Mg(2+) as a cofactor.

It carries out the reaction pyridoxal + ATP = pyridoxal 5'-phosphate + ADP + H(+). The protein operates within cofactor metabolism; pyridoxal 5'-phosphate salvage; pyridoxal 5'-phosphate from pyridoxal: step 1/1. Its function is as follows. Pyridoxal kinase involved in the salvage pathway of pyridoxal 5'-phosphate (PLP). Catalyzes the phosphorylation of pyridoxal to PLP. In Aliivibrio fischeri (strain ATCC 700601 / ES114) (Vibrio fischeri), this protein is Pyridoxal kinase PdxY.